Consider the following 228-residue polypeptide: Orotate phosphoribosyltransferase (228 aa).

K26 is a binding site for 5-phospho-alpha-D-ribose 1-diphosphate. F34 to F35 lines the orotate pocket. 5-phospho-alpha-D-ribose 1-diphosphate-binding positions include Y72 to K73, R98, K99, K102, H104, and D123 to S131. S127 and R155 together coordinate orotate.

Belongs to the purine/pyrimidine phosphoribosyltransferase family. PyrE subfamily. As to quaternary structure, homodimer. Mg(2+) is required as a cofactor.

The catalysed reaction is orotidine 5'-phosphate + diphosphate = orotate + 5-phospho-alpha-D-ribose 1-diphosphate. The protein operates within pyrimidine metabolism; UMP biosynthesis via de novo pathway; UMP from orotate: step 1/2. Catalyzes the transfer of a ribosyl phosphate group from 5-phosphoribose 1-diphosphate to orotate, leading to the formation of orotidine monophosphate (OMP). This Nitrosospira multiformis (strain ATCC 25196 / NCIMB 11849 / C 71) protein is Orotate phosphoribosyltransferase.